We begin with the raw amino-acid sequence, 255 residues long: Fumarate reductase cytochrome b subunit (255 aa).

The next 5 membrane-spanning stretches (helical) occupy residues Thr-33–Ile-53, Ile-78–Leu-98, Trp-126–Val-146, Phe-168–Tyr-188, and Ile-208–Ile-228. Heme b-binding residues include His-44, His-93, His-143, and His-182.

It belongs to the diheme cytochrome b FrdC family. Part of an enzyme complex containing three subunits: a flavoprotein (frdA), an iron-sulfur protein (frdB), and diheme cytochrome b (frdC). Heme b is required as a cofactor.

The protein resides in the cell inner membrane. The fumarate reductase enzyme complex is required for fumarate respiration. This subunit anchors the complex in the membrane and binds a diheme cytochrome b. The polypeptide is Fumarate reductase cytochrome b subunit (frdC) (Helicobacter pylori (strain J99 / ATCC 700824) (Campylobacter pylori J99)).